The chain runs to 130 residues: MTSFSTLLSVHLISIALSVGLLTLRFWLRYQKHPQAFARWTRIVPPVVDTLLLLSGIALMAKAHILPFSGQAQWLTEKLFGVIIYIVLGFIALDYRRMHSQQARIIAFPLALVVLYIIIKLATTKVPLLG.

Over 1 to 9 (MTSFSTLLS) the chain is Periplasmic. The chain crosses the membrane as a helical span at residues 10-28 (VHLISIALSVGLLTLRFWL). At 29–39 (RYQKHPQAFAR) the chain is on the cytoplasmic side. Residues 40–59 (WTRIVPPVVDTLLLLSGIAL) form a helical membrane-spanning segment. Topologically, residues 60–73 (MAKAHILPFSGQAQ) are periplasmic. Residues 74-93 (WLTEKLFGVIIYIVLGFIAL) traverse the membrane as a helical segment. At 94–104 (DYRRMHSQQAR) the chain is on the cytoplasmic side. A helical transmembrane segment spans residues 105 to 124 (IIAFPLALVVLYIIIKLATT). Residues 125–130 (KVPLLG) lie on the Periplasmic side of the membrane.

Belongs to the SirB2 family.

The protein localises to the cell inner membrane. This is Protein YchQ (ychQ) from Escherichia coli (strain K12).